A 269-amino-acid chain; its full sequence is GTP cyclohydrolase FolE2 (269 aa).

Belongs to the GTP cyclohydrolase IV family.

The catalysed reaction is GTP + H2O = 7,8-dihydroneopterin 3'-triphosphate + formate + H(+). Its pathway is cofactor biosynthesis; 7,8-dihydroneopterin triphosphate biosynthesis; 7,8-dihydroneopterin triphosphate from GTP: step 1/1. Converts GTP to 7,8-dihydroneopterin triphosphate. The sequence is that of GTP cyclohydrolase FolE2 from Azoarcus sp. (strain BH72).